The chain runs to 406 residues: Tryptophan synthase beta chain (406 aa).

Residue K99 is modified to N6-(pyridoxal phosphate)lysine.

Belongs to the TrpB family. As to quaternary structure, tetramer of two alpha and two beta chains. Pyridoxal 5'-phosphate is required as a cofactor.

The enzyme catalyses (1S,2R)-1-C-(indol-3-yl)glycerol 3-phosphate + L-serine = D-glyceraldehyde 3-phosphate + L-tryptophan + H2O. The protein operates within amino-acid biosynthesis; L-tryptophan biosynthesis; L-tryptophan from chorismate: step 5/5. Functionally, the beta subunit is responsible for the synthesis of L-tryptophan from indole and L-serine. The chain is Tryptophan synthase beta chain from Sinorhizobium fredii (strain NBRC 101917 / NGR234).